Here is a 98-residue protein sequence, read N- to C-terminus: NADH-ubiquinone oxidoreductase chain 4L (98 aa).

The next 3 helical transmembrane spans lie at 1–21, 29–49, and 61–81; these read MSMV…GLLM, SLLC…LMIL, and IILL…LVMI.

Belongs to the complex I subunit 4L family. In terms of assembly, core subunit of respiratory chain NADH dehydrogenase (Complex I) which is composed of 45 different subunits.

Its subcellular location is the mitochondrion inner membrane. It carries out the reaction a ubiquinone + NADH + 5 H(+)(in) = a ubiquinol + NAD(+) + 4 H(+)(out). Functionally, core subunit of the mitochondrial membrane respiratory chain NADH dehydrogenase (Complex I) which catalyzes electron transfer from NADH through the respiratory chain, using ubiquinone as an electron acceptor. Part of the enzyme membrane arm which is embedded in the lipid bilayer and involved in proton translocation. The protein is NADH-ubiquinone oxidoreductase chain 4L (MT-ND4L) of Vicugna pacos (Alpaca).